A 113-amino-acid polypeptide reads, in one-letter code: Hydrogenase maturation factor HypA (113 aa).

H2 is a binding site for Ni(2+). Positions 73, 76, 89, and 92 each coordinate Zn(2+).

Belongs to the HypA/HybF family.

Functionally, involved in the maturation of [NiFe] hydrogenases. Required for nickel insertion into the metal center of the hydrogenase. In Acidithiobacillus ferrooxidans (strain ATCC 23270 / DSM 14882 / CIP 104768 / NCIMB 8455) (Ferrobacillus ferrooxidans (strain ATCC 23270)), this protein is Hydrogenase maturation factor HypA.